A 334-amino-acid chain; its full sequence is Ornithine carbamoyltransferase (334 aa).

Carbamoyl phosphate-binding positions include 57-60, Gln84, Arg108, and 135-138; these read STRT and HPTQ. L-ornithine contacts are provided by residues Asn168, Asp232, and 236–237; that span reads SM. Carbamoyl phosphate contacts are provided by residues 274-275 and Arg321; that span reads CL.

The protein belongs to the aspartate/ornithine carbamoyltransferase superfamily. OTCase family.

Its subcellular location is the cytoplasm. It carries out the reaction carbamoyl phosphate + L-ornithine = L-citrulline + phosphate + H(+). It participates in amino-acid degradation; L-arginine degradation via ADI pathway; carbamoyl phosphate from L-arginine: step 2/2. Functionally, reversibly catalyzes the transfer of the carbamoyl group from carbamoyl phosphate (CP) to the N(epsilon) atom of ornithine (ORN) to produce L-citrulline. The chain is Ornithine carbamoyltransferase from Haemophilus influenzae (strain PittGG).